A 387-amino-acid chain; its full sequence is Phosphoglycerate kinase (387 aa).

Substrate-binding positions include 21-23, Arg36, and 59-62; these read DLN and HLGR. An N6-acetyllysine modification is found at Lys84. Positions 113 and 146 each coordinate substrate. ATP is bound by residues Lys197, Glu314, and 340 to 343; that span reads GGDT.

It belongs to the phosphoglycerate kinase family. As to quaternary structure, monomer.

Its subcellular location is the cytoplasm. It catalyses the reaction (2R)-3-phosphoglycerate + ATP = (2R)-3-phospho-glyceroyl phosphate + ADP. The protein operates within carbohydrate degradation; glycolysis; pyruvate from D-glyceraldehyde 3-phosphate: step 2/5. The polypeptide is Phosphoglycerate kinase (Shigella sonnei (strain Ss046)).